The following is a 512-amino-acid chain: ATP synthase subunit alpha (512 aa).

169–176 (GDRQTGKT) is a binding site for ATP.

Belongs to the ATPase alpha/beta chains family. In terms of assembly, F-type ATPases have 2 components, CF(1) - the catalytic core - and CF(0) - the membrane proton channel. CF(1) has five subunits: alpha(3), beta(3), gamma(1), delta(1), epsilon(1). CF(0) has four main subunits: a(1), b(1), b'(1) and c(9-12).

The protein localises to the cell inner membrane. The enzyme catalyses ATP + H2O + 4 H(+)(in) = ADP + phosphate + 5 H(+)(out). Functionally, produces ATP from ADP in the presence of a proton gradient across the membrane. The alpha chain is a regulatory subunit. This Jannaschia sp. (strain CCS1) protein is ATP synthase subunit alpha.